A 378-amino-acid polypeptide reads, in one-letter code: Cytochrome b (378 aa).

The next 4 helical transmembrane spans lie at 34–54 (FGSL…FLAM), 78–99 (WLLR…YLHV), 114–134 (WLIG…GYVL), and 179–199 (FFTF…IHLL). Heme b-binding residues include H84 and H98. Heme b-binding residues include H183 and H197. Residue H202 coordinates a ubiquinone. A run of 4 helical transmembrane segments spans residues 227–247 (FKDI…VLIS), 289–309 (LGGV…PFYN), 321–341 (INQV…WIGA), and 348–368 (YVLI…VNPL).

This sequence belongs to the cytochrome b family. The main subunits of complex b-c1 are: cytochrome b, cytochrome c1 and the Rieske protein. Heme b is required as a cofactor.

It is found in the mitochondrion inner membrane. Functionally, component of the ubiquinol-cytochrome c reductase complex (complex III or cytochrome b-c1 complex) that is part of the mitochondrial respiratory chain. The b-c1 complex mediates electron transfer from ubiquinol to cytochrome c. Contributes to the generation of a proton gradient across the mitochondrial membrane that is then used for ATP synthesis. The protein is Cytochrome b (mt:Cyt-b) of Drosophila melanogaster (Fruit fly).